Consider the following 186-residue polypeptide: Akirin-1A (186 aa).

The interval 14-65 (EALMSPQSPKRRRCAPLPGSPATPSPQRCAIRPEMQQGQQQPLSQLGGDRRL) is disordered. Residues 49–60 (QQGQQQPLSQLG) show a composition bias toward low complexity. An SYVS motif motif is present at residues 183 to 186 (SYVS).

The protein belongs to the akirin family.

The protein localises to the nucleus. Its function is as follows. Molecular adapter that acts as a bridge between proteins, and which is involved skeletal muscle development. Functions as a signal transducer for MSTN during skeletal muscle regeneration and myogenesis. This chain is Akirin-1A (akirin1-a), found in Xenopus laevis (African clawed frog).